The sequence spans 164 residues: Protein phosphatase 1 regulatory subunit 14C (164 aa).

Residues 1–19 (MSVVTGGGEAAGGTSGGGA) are compositionally biased toward gly residues. Residues 1-72 (MSVVTGGGEA…QRRHQQGKVT (72 aa)) are disordered. S2 carries the post-translational modification N-acetylserine. The residue at position 25 (S25) is a Phosphoserine. An Omega-N-methylarginine modification is found at R27. S33 is subject to Phosphoserine. The span at 50 to 62 (VATVAAAGQVQQQ) shows a compositional bias: low complexity. A Phosphothreonine; by ILK1 modification is found at T72.

It belongs to the PP1 inhibitor family. In terms of processing, has over 600-fold higher inhibitory activity when phosphorylated, creating a molecular switch for regulating the phosphorylation status of PPP1CA substrates and smooth muscle contraction. The main inhibitory site appears to be Thr-72.

Its subcellular location is the endomembrane system. In terms of biological role, inhibitor of the PP1 regulatory subunit PPP1CA. In Rattus norvegicus (Rat), this protein is Protein phosphatase 1 regulatory subunit 14C (Ppp1r14c).